The following is a 465-amino-acid chain: Glutamate--tRNA ligase 2 (465 aa).

The 'HIGH' region signature appears at 8–18 (PSPTGLMHLGN). Residues 249-253 (PLSKR) carry the 'KMSKS' region motif. K252 provides a ligand contact to ATP.

This sequence belongs to the class-I aminoacyl-tRNA synthetase family. Glutamate--tRNA ligase type 1 subfamily. As to quaternary structure, monomer.

Its subcellular location is the cytoplasm. The enzyme catalyses tRNA(Glu) + L-glutamate + ATP = L-glutamyl-tRNA(Glu) + AMP + diphosphate. Its function is as follows. Catalyzes the attachment of glutamate to tRNA(Glu) in a two-step reaction: glutamate is first activated by ATP to form Glu-AMP and then transferred to the acceptor end of tRNA(Glu). The sequence is that of Glutamate--tRNA ligase 2 from Coxiella burnetii (strain CbuK_Q154) (Coxiella burnetii (strain Q154)).